A 606-amino-acid chain; its full sequence is MTDPNPKGSTSKEGFGDWCLLEADCSDVENDLGQLFERDTDSDISDLLDDTELEQGNSLELFHQQECEQSEEQLQKLKRKYLSPKAIAQLSPRLESISLSPQQKSKRRLFAEQDSGLELTLNNEAEDVTPEVEVPAIDSRPDDEGGSGDVDIHYTSLLRSSNKKATLMAKFKESFGVGFNELTRQFKSHKTCCKDWVVSVYAVHDDLFESSKQLLQQHCDYIWVRGIGAMSLYLLCFKAGKNRGTVHKLITSMLNVHEQQILSEPPKLRNTAAALFWYKGCMGSGAFSHGPYPDWIAQQTILGHKSAEASTFDFSAMVQWAFDNHLLDEPDIAYQYARLAPEDANAVAWLAHNNQAKFVRECAAMVRFYKKGQMRDMSISEWIYTKINEVEGEGHWSDIVKFIRYQNINFIVFLTALKEFLHSVPKKNCILIYGPPNSGKSSFAMSLIRVLKGRVLSFVNSKSQFWLQPLSECKIALLDDVTDPCWVYMDTYLRNGLDGHYVSLDCKYRAPTQMKFPPLLLTSNINVHGEANYRYLHSRIRGFEFPNPFPMKADNTPQFELTDQSWKSFFTRLWTQLDLSDQEEEGEDGESQRAFQCSARSANEHL.

Positions 78–80 (KRK) match the Nuclear localization signal motif. Phosphoserine; by host is present on residues S83 and S91. Residues 90-99 (LSPRLESISL) carry the Nuclear export signal motif. The segment at 146 to 309 (GSGDVDIHYT…TILGHKSAEA (164 aa)) is DNA-binding region. An SF3 helicase domain is found at 408–558 (INFIVFLTAL…FPMKADNTPQ (151 aa)). Residue 434-441 (GPPNSGKS) coordinates ATP. Residue K515 forms a Glycyl lysine isopeptide (Lys-Gly) (interchain with G-Cter in SUMO) linkage. Residues 581-606 (DQEEEGEDGESQRAFQCSARSANEHL) form a disordered region. Over residues 593–606 (RAFQCSARSANEHL) the composition is skewed to polar residues.

Belongs to the papillomaviridae E1 protein family. Can form hexamers. Interacts with E2 protein; this interaction increases E1 DNA binding specificity. Interacts with host DNA polymerase subunit POLA2. Interacts with host single stranded DNA-binding protein RPA1. Interacts with host TOP1; this interaction stimulates the enzymatic activity of TOP1. Phosphorylated. Post-translationally, sumoylated.

It localises to the host nucleus. The enzyme catalyses Couples ATP hydrolysis with the unwinding of duplex DNA by translocating in the 3'-5' direction.. The catalysed reaction is ATP + H2O = ADP + phosphate + H(+). Functionally, ATP-dependent DNA 3'-5' helicase required for initiation of viral DNA replication. It forms a complex with the viral E2 protein. The E1-E2 complex binds to the replication origin which contains binding sites for both proteins. During the initial step, a dimer of E1 interacts with a dimer of protein E2 leading to a complex that binds the viral origin of replication with high specificity. Then, a second dimer of E1 displaces the E2 dimer in an ATP-dependent manner to form the E1 tetramer. Following this, two E1 monomers are added to each half of the site, which results in the formation of two E1 trimers on the viral ori. Subsequently, two hexamers will be created. The double hexamer acts as a bi-directional helicase machinery and unwinds the viral DNA and then recruits the host DNA polymerase to start replication. The chain is Replication protein E1 from Human papillomavirus type 5b.